A 680-amino-acid chain; its full sequence is Fermitin family homolog 2 (680 aa).

Residues 40 to 81 (HIGGVMLKLVEKLDVKKDWSDHALWWEKKRTWLLKTHWTLDK) form an interaction with membranes containing phosphatidylinositol phosphate region. The tract at residues 141-165 (LKKPRDPTKKKKKKLDDQSEDEALE) is disordered. Phosphoserine is present on residues Ser-159, Ser-181, Ser-339, and Ser-351. The 473-residue stretch at 189–661 (MTPTYDAHDG…GYIFLSTRAK (473 aa)) folds into the FERM domain. One can recognise a PH domain in the interval 380 to 476 (KVFKPKKLTL…WMAACRLASK (97 aa)). Residue Lys-383 coordinates a 1,2-diacyl-sn-glycero-3-phospho-(1D-myo-inositol-3,4,5-trisphosphate). Position 666 is a phosphoserine (Ser-666).

It belongs to the kindlin family. Interacts with ILK. Interacts with FBLIM1. Interacts with ITGB1 and ITGB3. Interacts with active, unphosphorylated CTNNB1. Identified in a complex with CTNNB1 and TCF7L2/TCF4. Interacts with ITGB1; the interaction is inhibited in presence of ITGB1BP1. As to expression, ubiquitous. Found in numerous tumor tissues.

The protein resides in the cytoplasm. It is found in the cell cortex. The protein localises to the cytoskeleton. Its subcellular location is the stress fiber. It localises to the cell junction. The protein resides in the focal adhesion. It is found in the membrane. The protein localises to the cell projection. Its subcellular location is the lamellipodium membrane. It localises to the nucleus. The protein resides in the myofibril. It is found in the sarcomere. The protein localises to the i band. Its subcellular location is the cell surface. In terms of biological role, scaffolding protein that enhances integrin activation mediated by TLN1 and/or TLN2, but activates integrins only weakly by itself. Binds to membranes enriched in phosphoinositides. Enhances integrin-mediated cell adhesion onto the extracellular matrix and cell spreading; this requires both its ability to interact with integrins and with phospholipid membranes. Required for the assembly of focal adhesions. Participates in the connection between extracellular matrix adhesion sites and the actin cytoskeleton and also in the orchestration of actin assembly and cell shape modulation. Recruits FBLIM1 to focal adhesions. Plays a role in the TGFB1 and integrin signaling pathways. Stabilizes active CTNNB1 and plays a role in the regulation of transcription mediated by CTNNB1 and TCF7L2/TCF4 and in Wnt signaling. The sequence is that of Fermitin family homolog 2 (FERMT2) from Homo sapiens (Human).